We begin with the raw amino-acid sequence, 822 residues long: Fibroblast growth factor receptor 1 (822 aa).

The first 21 residues, 1–21, serve as a signal peptide directing secretion; the sequence is MWGWKCLLFWAVLVTATLCTA. Residues 22–376 lie on the Extracellular side of the membrane; it reads RPAPTLPEQA…AVMTSPLYLE (355 aa). In terms of domain architecture, Ig-like C2-type 1 spans 25–119; sequence PTLPEQAQPW…DTTYFSVNVS (95 aa). Cys-55 and Cys-101 are oxidised to a cystine. N-linked (GlcNAc...) asparagine glycosylation is found at Asn-77 and Asn-117. The tract at residues 120 to 162 is disordered; that stretch reads DALPSSEDDDDDDDSSSEEKETDNTKPNRRPVAPYWTSPEKME. Acidic residues predominate over residues 125–135; sequence SEDDDDDDDSS. The segment covering 136 to 145 has biased composition (basic and acidic residues); sequence SEEKETDNTK. Ig-like C2-type domains lie at 158–246 and 255–357; these read PEKM…YQLD and PILQ…AWLT. Residues 160 to 177 are heparin-binding; the sequence is KMEKKLHAVPAAKTVKFK. Residues Cys-178 and Cys-230 are joined by a disulfide bond. Asn-227, Asn-240, Asn-264, Asn-296, Asn-317, and Asn-330 each carry an N-linked (GlcNAc...) asparagine glycan. An intrachain disulfide couples Cys-277 to Cys-341. The chain crosses the membrane as a helical span at residues 377–397; it reads IIIYCTGAFLISCMLGSVIIY. Residues 398-822 are Cytoplasmic-facing; the sequence is KMKSGTKKSD…QLANSGLKRR (425 aa). Tyr-463 is subject to Phosphotyrosine; by autocatalysis. A Protein kinase domain is found at 478–767; the sequence is LVLGKPLGEG…VALTSNQEYL (290 aa). ATP-binding positions include 484–490, Lys-514, 562–564, and Asn-568; these read LGEGCFG and EYA. Residues Tyr-583 and Tyr-585 each carry the phosphotyrosine; by autocatalysis modification. Residue Asp-623 is the Proton acceptor of the active site. ATP-binding residues include Arg-627 and Asp-641. 4 positions are modified to phosphotyrosine; by autocatalysis: Tyr-653, Tyr-654, Tyr-730, and Tyr-766. Positions 782 to 792 are enriched in polar residues; the sequence is DTRSSTCSSGE. Residues 782–822 are disordered; sequence DTRSSTCSSGEDSVFSHEPLPEEPCLPRHPTQLANSGLKRR.

It belongs to the protein kinase superfamily. Tyr protein kinase family. Fibroblast growth factor receptor subfamily. In terms of assembly, monomer. Homodimer after ligand binding. Interacts predominantly with FGF1 and FGF2, but can also interact with FGF3, FGF4, FGF5, FGF6, FGF8, FGF10, FGF19, FGF21, FGF22 and FGF23 (in vitro). Ligand specificity is determined by tissue-specific expression of isoforms, and differences in the third Ig-like domain are crucial for ligand specificity. Affinity for fibroblast growth factors (FGFs) is increased by heparan sulfate glycosaminoglycans that function as coreceptors. Likewise, KLB increases the affinity for FGF19, FGF21 and FGF23. Interacts (phosphorylated on Tyr-766) with PLCG1 (via SH2 domains). Interacts with FRS2. Interacts with RPS6KA1. Interacts (via C-terminus) with NEDD4 (via WW3 domain). Interacts with KL. Interacts with SHB (via SH2 domain). Interacts with GRB10. Interacts with ANOS1; this interaction does not interfere with FGF2-binding to FGFR1, but prevents binding of heparin-bound FGF2. Interacts with SOX2 and SOX3. Interacts with FLRT1, FLRT2 and FLRT3. Found in a ternary complex with FGF1 and ITGAV:ITGB3. In terms of processing, autophosphorylated. Binding of FGF family members together with heparan sulfate proteoglycan or heparin promotes receptor dimerization and autophosphorylation on tyrosine residues. Autophosphorylation occurs in trans between the two FGFR molecules present in the dimer and proceeds in a highly ordered manner. Initial autophosphorylation at Tyr-653 increases the kinase activity by a factor of 50 to 100. After this, Tyr-583 becomes phosphorylated, followed by phosphorylation of Tyr-463, Tyr-766, Tyr-583 and Tyr-585. In a third stage, Tyr-654 is autophosphorylated, resulting in a further tenfold increase of kinase activity. Phosphotyrosine residues provide docking sites for interacting proteins and so are crucial for FGFR1 function and its regulation. Ubiquitinated. FGFR1 is rapidly ubiquitinated by NEDD4 after autophosphorylation, leading to internalization and lysosomal degradation. CBL is recruited to activated FGFR1 via FRS2 and GRB2, and mediates ubiquitination and subsequent degradation of FGFR1. Post-translationally, N-glycosylated in the endoplasmic reticulum. The N-glycan chains undergo further maturation to an Endo H-resistant form in the Golgi apparatus. Widely expressed.

The protein localises to the cell membrane. It is found in the nucleus. Its subcellular location is the cytoplasm. The protein resides in the cytosol. It localises to the cytoplasmic vesicle. It catalyses the reaction L-tyrosyl-[protein] + ATP = O-phospho-L-tyrosyl-[protein] + ADP + H(+). Present in an inactive conformation in the absence of bound ligand. Ligand binding leads to dimerization and activation by sequential autophosphorylation on tyrosine residues. Its function is as follows. Tyrosine-protein kinase that acts as a cell-surface receptor for fibroblast growth factors and plays an essential role in the regulation of embryonic development, cell proliferation, differentiation and migration. Required for normal mesoderm patterning and correct axial organization during embryonic development, normal skeletogenesis and normal development of the gonadotropin-releasing hormone (GnRH) neuronal system. Phosphorylates PLCG1, FRS2, GAB1 and SHB. Ligand binding leads to the activation of several signaling cascades. Activation of PLCG1 leads to the production of the cellular signaling molecules diacylglycerol and inositol 1,4,5-trisphosphate. Phosphorylation of FRS2 triggers recruitment of GRB2, GAB1, PIK3R1 and SOS1, and mediates activation of RAS, MAPK1/ERK2, MAPK3/ERK1 and the MAP kinase signaling pathway, as well as of the AKT1 signaling pathway. Promotes phosphorylation of SHC1, STAT1 and PTPN11/SHP2. In the nucleus, enhances RPS6KA1 and CREB1 activity and contributes to the regulation of transcription. FGFR1 signaling is down-regulated by IL17RD/SEF, and by FGFR1 ubiquitination, internalization and degradation. The sequence is that of Fibroblast growth factor receptor 1 (Fgfr1) from Mus musculus (Mouse).